Reading from the N-terminus, the 33-residue chain is Photosystem II reaction center protein Psb30 (33 aa).

The helical transmembrane segment at 5 to 25 threads the bilayer; that stretch reads LITQLASLILIVASGPIVIGL.

This sequence belongs to the Psb30/Ycf12 family. PSII is composed of 1 copy each of membrane proteins PsbA, PsbB, PsbC, PsbD, PsbE, PsbF, PsbH, PsbI, PsbJ, PsbK, PsbL, PsbM, PsbT, PsbX, PsbY, PsbZ, Psb30/Ycf12, peripheral proteins of the oxygen-evolving complex and a large number of cofactors. It forms dimeric complexes.

It localises to the plastid. Its subcellular location is the chloroplast thylakoid membrane. Functionally, a core subunit of photosystem II (PSII), probably helps stabilize the reaction center. This chain is Photosystem II reaction center protein Psb30, found in Lepocinclis buetschlii.